Consider the following 316-residue polypeptide: Probable cell division protein WhiA (316 aa).

A DNA-binding region (H-T-H motif) is located at residues 275–309 (TLKELGEMVASGKISKSGINHRLRKLDEIAEQLRT).

This sequence belongs to the WhiA family.

In terms of biological role, involved in cell division and chromosome segregation. The sequence is that of Probable cell division protein WhiA from Bacillus velezensis (strain DSM 23117 / BGSC 10A6 / LMG 26770 / FZB42) (Bacillus amyloliquefaciens subsp. plantarum).